The chain runs to 164 residues: CASP-like protein 1C2 (164 aa).

At 1-8 (MVKLTQRL) the chain is on the cytoplasmic side. The helical transmembrane segment at 9–29 (GGLVLRFAAFCAALGAVIAMI) threads the bilayer. Residues 30–51 (TSRERSSFFVISLVAKYSDLAA) are Extracellular-facing. Residues 52–72 (FKYFVIANAIVTVYSFLVLFL) form a helical membrane-spanning segment. Over 73–80 (PKESLLWK) the chain is Cytoplasmic. The helical transmembrane segment at 81-101 (FVVVLDLMVTMLLTSSLSAAV) threads the bilayer. At 102–129 (AVAQVGKRGNANAGWLPICGQVPRFCDQ) the chain is on the extracellular side. A helical transmembrane segment spans residues 130–150 (ITGALIAGLVALVLYVFLLIF). The Cytoplasmic portion of the chain corresponds to 151-164 (SIHHVVDPFLLRKS).

The protein belongs to the Casparian strip membrane proteins (CASP) family. As to quaternary structure, homodimer and heterodimers.

It is found in the cell membrane. In Arabidopsis thaliana (Mouse-ear cress), this protein is CASP-like protein 1C2.